A 317-amino-acid polypeptide reads, in one-letter code: Apolipoprotein E (317 aa).

The first 18 residues, 1–18 (MKVLWAALLVTFLAGCQA), serve as a signal peptide directing secretion. 8 repeat units span residues 80–101 (ALMD…EQLT), 102–123 (PVAE…ARLG), 124–145 (ADME…AMLG), 146–167 (QSTE…KRLL), 168–189 (RDAD…EGAE), 190–211 (RGVS…VRAA), 212–233 (TVGS…ERLR), and 234–255 (ARME…EQVA). An 8 X 22 AA approximate tandem repeats region spans residues 80-255 (ALMDETMKEL…RLDEVKEQVA (176 aa)). Methionine sulfoxide is present on Met-143. At Ser-147 the chain carries Phosphoserine. Residues 158–168 (HLRKLRKRLLR) form an LDL and other lipoprotein receptors binding region. 162–165 (LRKR) provides a ligand contact to heparin. The lipid-binding and lipoprotein association stretch occupies residues 210–290 (AATVGSLAGQ…SWFEPLVEDM (81 aa)). Residue 229–236 (GERLRARM) participates in heparin binding. The tract at residues 266–317 (QQIRLQAEAFQARLKSWFEPLVEDMQRQWAGLVEKVQAAMGTSAAPVPSDNH) is homooligomerization. Residues 278-290 (RLKSWFEPLVEDM) are specificity for association with VLDL.

This sequence belongs to the apolipoprotein A1/A4/E family. In terms of assembly, homotetramer. May interact with ABCA1; functionally associated with ABCA1 in the biogenesis of HDLs. May interact with APP/A4 amyloid-beta peptide; the interaction is extremely stable in vitro but its physiological significance is unclear. May interact with MAPT. May interact with MAP2. In the cerebrospinal fluid, interacts with secreted SORL1. Interacts with PMEL; this allows the loading of PMEL luminal fragment on ILVs to induce fibril nucleation. Post-translationally, APOE exists as multiple glycosylated and sialylated glycoforms within cells and in plasma. The extent of glycosylation and sialylation are tissue and context specific. In terms of processing, glycated in plasma VLDL. Phosphorylated by FAM20C in the extracellular medium.

It localises to the secreted. The protein localises to the extracellular space. Its subcellular location is the extracellular matrix. It is found in the extracellular vesicle. The protein resides in the endosome. It localises to the multivesicular body. In terms of biological role, APOE is an apolipoprotein, a protein associating with lipid particles, that mainly functions in lipoprotein-mediated lipid transport between organs via the plasma and interstitial fluids. APOE is a core component of plasma lipoproteins and is involved in their production, conversion and clearance. Apolipoproteins are amphipathic molecules that interact both with lipids of the lipoprotein particle core and the aqueous environment of the plasma. As such, APOE associates with chylomicrons, chylomicron remnants, very low density lipoproteins (VLDL) and intermediate density lipoproteins (IDL) but shows a preferential binding to high-density lipoproteins (HDL). It also binds a wide range of cellular receptors including the LDL receptor/LDLR, the LDL receptor-related proteins LRP1, LRP2 and LRP8 and the very low-density lipoprotein receptor/VLDLR that mediate the cellular uptake of the APOE-containing lipoprotein particles. Finally, APOE also has a heparin-binding activity and binds heparan-sulfate proteoglycans on the surface of cells, a property that supports the capture and the receptor-mediated uptake of APOE-containing lipoproteins by cells. A main function of APOE is to mediate lipoprotein clearance through the uptake of chylomicrons, VLDLs, and HDLs by hepatocytes. APOE is also involved in the biosynthesis by the liver of VLDLs as well as their uptake by peripheral tissues ensuring the delivery of triglycerides and energy storage in muscle, heart and adipose tissues. By participating in the lipoprotein-mediated distribution of lipids among tissues, APOE plays a critical role in plasma and tissues lipid homeostasis. APOE is also involved in two steps of reverse cholesterol transport, the HDLs-mediated transport of cholesterol from peripheral tissues to the liver, and thereby plays an important role in cholesterol homeostasis. First, it is functionally associated with ABCA1 in the biogenesis of HDLs in tissues. Second, it is enriched in circulating HDLs and mediates their uptake by hepatocytes. APOE also plays an important role in lipid transport in the central nervous system, regulating neuron survival and sprouting. The polypeptide is Apolipoprotein E (APOE) (Gorilla gorilla gorilla (Western lowland gorilla)).